Reading from the N-terminus, the 212-residue chain is Methylthioribulose-1-phosphate dehydratase (212 aa).

Zn(2+)-binding residues include His-98 and His-100.

This sequence belongs to the aldolase class II family. MtnB subfamily. The cofactor is Zn(2+).

The enzyme catalyses 5-(methylsulfanyl)-D-ribulose 1-phosphate = 5-methylsulfanyl-2,3-dioxopentyl phosphate + H2O. Its pathway is amino-acid biosynthesis; L-methionine biosynthesis via salvage pathway; L-methionine from S-methyl-5-thio-alpha-D-ribose 1-phosphate: step 2/6. Its function is as follows. Catalyzes the dehydration of methylthioribulose-1-phosphate (MTRu-1-P) into 2,3-diketo-5-methylthiopentyl-1-phosphate (DK-MTP-1-P). In Picosynechococcus sp. (strain ATCC 27264 / PCC 7002 / PR-6) (Agmenellum quadruplicatum), this protein is Methylthioribulose-1-phosphate dehydratase.